Here is an 88-residue protein sequence, read N- to C-terminus: uncharacterized protein (88 aa).

A disordered region spans residues 1-88; it reads MPHLPELSKQ…IRRGNPSGVA (88 aa). Basic and acidic residues predominate over residues 21-65; the sequence is YRAKGEDLENSHHNNESRLAEGVHYDRNKAPALQEREKASTEKVN.

Functionally, involved in osmoadaptation. This is an uncharacterized protein from Emericella nidulans (strain FGSC A4 / ATCC 38163 / CBS 112.46 / NRRL 194 / M139) (Aspergillus nidulans).